The primary structure comprises 167 residues: Peptide deformylase (167 aa).

C91 and H133 together coordinate Fe cation. The active site involves E134. Residue H137 participates in Fe cation binding.

Belongs to the polypeptide deformylase family. Fe(2+) serves as cofactor.

The enzyme catalyses N-terminal N-formyl-L-methionyl-[peptide] + H2O = N-terminal L-methionyl-[peptide] + formate. Functionally, removes the formyl group from the N-terminal Met of newly synthesized proteins. Requires at least a dipeptide for an efficient rate of reaction. N-terminal L-methionine is a prerequisite for activity but the enzyme has broad specificity at other positions. The sequence is that of Peptide deformylase from Nitrosococcus oceani (strain ATCC 19707 / BCRC 17464 / JCM 30415 / NCIMB 11848 / C-107).